The primary structure comprises 160 residues: 2-C-methyl-D-erythritol 2,4-cyclodiphosphate synthase (160 aa).

The a divalent metal cation site is built by aspartate 10 and histidine 12. Residues 10 to 12 (DVH) and 36 to 37 (HS) contribute to the 4-CDP-2-C-methyl-D-erythritol 2-phosphate site. Histidine 44 serves as a coordination point for a divalent metal cation. 4-CDP-2-C-methyl-D-erythritol 2-phosphate is bound by residues 58–60 (DIG), 63–67 (FPDTD), 102–108 (AQAPKMA), 134–137 (TTTE), phenylalanine 141, and arginine 144.

Belongs to the IspF family. Homotrimer. It depends on a divalent metal cation as a cofactor.

It catalyses the reaction 4-CDP-2-C-methyl-D-erythritol 2-phosphate = 2-C-methyl-D-erythritol 2,4-cyclic diphosphate + CMP. It participates in isoprenoid biosynthesis; isopentenyl diphosphate biosynthesis via DXP pathway; isopentenyl diphosphate from 1-deoxy-D-xylulose 5-phosphate: step 4/6. Its function is as follows. Involved in the biosynthesis of isopentenyl diphosphate (IPP) and dimethylallyl diphosphate (DMAPP), two major building blocks of isoprenoid compounds. Catalyzes the conversion of 4-diphosphocytidyl-2-C-methyl-D-erythritol 2-phosphate (CDP-ME2P) to 2-C-methyl-D-erythritol 2,4-cyclodiphosphate (ME-CPP) with a corresponding release of cytidine 5-monophosphate (CMP). The polypeptide is 2-C-methyl-D-erythritol 2,4-cyclodiphosphate synthase (Shewanella denitrificans (strain OS217 / ATCC BAA-1090 / DSM 15013)).